The sequence spans 867 residues: Dynamin-1 (867 aa).

The Dynamin-type G domain occupies 28-294 (DLDLPQIAVV…LTNHIRDTLP (267 aa)). Positions 38–45 (GGQSAGKS) are G1 motif. 7 residues coordinate GDP: Ser41, Gly43, Lys44, Ser45, Ser46, Arg59, and Gly60. The tract at residues 64–66 (VTR) is G2 motif. Tyr80 carries the phosphotyrosine modification. The residue at position 125 (Tyr125) is a 3'-nitrotyrosine; alternate. A Phosphotyrosine; alternate modification is found at Tyr125. The segment at 136–139 (DLPG) is G3 motif. Residues 205–208 (TKLD) are G4 motif. Lys206, Asp208, Asp211, Asn236, Arg237, and Gln239 together coordinate GDP. Residues 235-238 (VNRS) form a G5 motif region. Residues Ser306 and Ser347 each carry the phosphoserine modification. A Phosphotyrosine modification is found at Tyr354. Residue Ser512 is modified to Phosphoserine. The 111-residue stretch at 515 to 625 (QDEILVIRKG…WKASFLRAGV (111 aa)) folds into the PH domain. The GED domain maps to 659–750 (VETIRNLVDS…IIGDINTTTV (92 aa)). Positions 767–867 (SVPAGRRSPT…HENRAGKARL (101 aa)) are disordered. Phosphoserine occurs at positions 774 and 778. The residue at position 796 (Arg796) is an Omega-N-methylarginine. Ser822 carries the phosphoserine modification. Positions 825 to 843 (PFGPPPQVPSRPNRAPPGV) are enriched in pro residues. 3 positions are modified to phosphoserine: Gly847, Leu851, and Lys857. Basic and acidic residues predominate over residues 856-867 (GKHENRAGKARL).

It belongs to the TRAFAC class dynamin-like GTPase superfamily. Dynamin/Fzo/YdjA family. As to quaternary structure, homodimer; homodimerization is mediated by the dynamin-type G domain which promotes assembly-stimulated GTPase activity. Homo-tetramer formed from two dimers in the absence of lipid. Oligomerizes into a helical polymer that self-assembles around the vesicle membrane, when associated to the menbrane through lipid binding. Interacts (via C-terminal proline-rich domain (PRD)) with SNX9 (via SH3 domain); this interaction allows regulation of DNM1 self-assembly during late stages of endocytic vesicle formation and supports DNM1's early functions in accelerating clathrin-coated pits (CCPs) maturation in non neuronals cell. Interacts (via C-terminal proline-rich domain (PRD)) with MYO1E (via SH3 domain); this interaction regulates receptor-mediated endocytosis. Interacts with SNX33 (via SH3 domain); this interaction decreases DNM1-dependent endocytosis. Interacts with DIAPH1. Interacts with GRB2 (via SH3 domain); this interaction mediates disassembly of DNM1 polymers, therefore modulates self-assembly. Forms a complex with BIN1 (via SH3 domain) and SH3GL2 (via SH3 domain). Forms a complex with SH3GL2 (via SH3 domain) and AMPH (via SH3 domain). Forms a complex with SH3GL2 (via SH3 domain) and SYNJ1. Interacts (via C-terminal proline-rich domain (PRD)) with SYT1; this interaction facilitates vesicle fission during clathrin-mediated endocytosis (CME). Interacts (via C-terminal proline-rich domain (PRD)) with PLCG1 (via SH3 domain); this interaction stimulates the release of GDP from DNM1 and enhances DNM1-dependent endocytosis. Interacts with SNPH; this interaction inhibits the binding of DNM1 to AMPH and DNM1-receptor-mediated endocytosis. Interacts with CAV1. Interacts with SH3GLB1 (via SH3 domain). Interacts with PACSIN1 (via SH3 domain), PACSIN2 (via SH3 domain) and PACSIN3 (via SH3 domain). Interacts with UNC119; this interaction decreases DNM1's GTPase activity and affects DNM1's interaction with AMPH. Interacts with AMPH. Interacts (GTP-bound form) with DNAJC6; this interaction allows clathrin-coated vesicle (CCV) formation at the plasma membrane. In terms of processing, phosphorylation at Ser-774 by GSK3B/GSK3-beta leads to inactivation of receptor-mediated endocytosis in non-neuronal cells. Dephosphorylation at Ser-774, through the EGFR downstream signaling, leads to activation and regulates early stages of clathrin-mediated endocytosis (CME). Phosphorylated on Tyr in response to EGF stimulation in cells expressing truncated EGFR. Phosphorylated by CDK5 leading to synaptic vesicle endocytosis (SVE) activation. In terms of tissue distribution, expressed exclusively in the brain.

The protein localises to the cell membrane. The protein resides in the membrane. It is found in the clathrin-coated pit. It localises to the cytoplasmic vesicle. Its subcellular location is the presynapse. The protein localises to the secretory vesicle. The protein resides in the chromaffin granule. It catalyses the reaction GTP + H2O = GDP + phosphate + H(+). Its function is as follows. Catalyzes the hydrolysis of GTP and utilizes this energy to mediate vesicle scission and participates in many forms of endocytosis, such as clathrin-mediated endocytosis or synaptic vesicle endocytosis as well as rapid endocytosis (RE). Associates to the membrane, through lipid binding, and self-assembles into rings and stacks of interconnected rings through oligomerization to form a helical polymer around the vesicle membrane leading to constriction of invaginated coated pits around their necks. Self-assembly of the helical polymer induces membrane tubules narrowing until the polymer reaches a length sufficient to trigger GTP hydrolysis. Depending on the curvature imposed on the tubules, membrane detachment from the helical polymer upon GTP hydrolysis can cause spontaneous hemifission followed by complete fission. May play a role in regulating early stages of clathrin-mediated endocytosis in non-neuronal cells through its activation by dephosphorylation via the signaling downstream of EGFR. Controls vesicle size at a step before fission, during formation of membrane pits, at hippocampal synapses. Controls plastic adaptation of the synaptic vesicle recycling machinery to high levels of activity. Mediates rapid endocytosis (RE), a Ca(2+)-dependent and clathrin- and K(+)-independent process in chromaffin cells. Microtubule-associated force-producing protein involved in producing microtubule bundles and able to bind and hydrolyze GTP. Through its interaction with DNAJC6, acts during the early steps of clathrin-coated vesicle (CCV) formation. The protein is Dynamin-1 of Mus musculus (Mouse).